The sequence spans 94 residues: MDEYTNDFPWMYIVICLTTIISVTIFYILVSFFIKRYRNRKNEELGHALITKIVYTPHYNSQPIINGSGHYSIINQPIQPQQQQPQNYYSSMIV.

A helical transmembrane segment spans residues 13–33 (IVICLTTIISVTIFYILVSFF).

The protein resides in the membrane. This is an uncharacterized protein from Dictyostelium discoideum (Social amoeba).